The sequence spans 489 residues: Mitochondrial-processing peptidase subunit beta (489 aa).

The N-terminal 43 residues, 1–43 (MAAAAARVVLSSAARRRLWGFSESLLIRGAAGRSLYFGENRLR), are a transit peptide targeting the mitochondrion. Residue His-101 coordinates Zn(2+). Catalysis depends on Glu-104, which acts as the Proton acceptor. Zn(2+) is bound by residues His-105 and Glu-181.

The protein belongs to the peptidase M16 family. As to quaternary structure, heterodimer of PMPCA (alpha) and PMPCB (beta) subunits, forming the mitochondrial processing protease (MPP) in which PMPCA is involved in substrate recognition and binding and PMPCB is the catalytic subunit. Requires Zn(2+) as cofactor.

It localises to the mitochondrion matrix. The enzyme catalyses Release of N-terminal transit peptides from precursor proteins imported into the mitochondrion, typically with Arg in position P2.. With respect to regulation, binding to PMPCA is required for catalytic activity. In terms of biological role, catalytic subunit of the essential mitochondrial processing protease (MPP), which cleaves the mitochondrial sequence off newly imported precursors proteins. Preferentially, cleaves after an arginine at position P2. Required for PINK1 turnover by coupling PINK1 mitochondrial import and cleavage, which results in subsequent PINK1 proteolysis. In Homo sapiens (Human), this protein is Mitochondrial-processing peptidase subunit beta (PMPCB).